A 106-amino-acid polypeptide reads, in one-letter code: Large ribosomal subunit protein uL23 (106 aa).

It belongs to the universal ribosomal protein uL23 family. As to quaternary structure, part of the 50S ribosomal subunit. Contacts protein L29, and trigger factor when it is bound to the ribosome.

Its function is as follows. One of the early assembly proteins it binds 23S rRNA. One of the proteins that surrounds the polypeptide exit tunnel on the outside of the ribosome. Forms the main docking site for trigger factor binding to the ribosome. This Neisseria meningitidis serogroup C / serotype 2a (strain ATCC 700532 / DSM 15464 / FAM18) protein is Large ribosomal subunit protein uL23.